The sequence spans 386 residues: Succinate--CoA ligase [ADP-forming] subunit beta (386 aa).

The ATP-grasp domain occupies 9 to 244 (KQILKKYGAV…LNEEDPTEID (236 aa)). ATP is bound by residues lysine 46, 53-55 (GRG), glutamate 99, serine 102, and glutamate 107. Asparagine 199 and aspartate 213 together coordinate Mg(2+). Residues asparagine 264 and 321–323 (GIM) each bind substrate.

Belongs to the succinate/malate CoA ligase beta subunit family. In terms of assembly, heterotetramer of two alpha and two beta subunits. Requires Mg(2+) as cofactor.

The catalysed reaction is succinate + ATP + CoA = succinyl-CoA + ADP + phosphate. It catalyses the reaction GTP + succinate + CoA = succinyl-CoA + GDP + phosphate. It functions in the pathway carbohydrate metabolism; tricarboxylic acid cycle; succinate from succinyl-CoA (ligase route): step 1/1. Succinyl-CoA synthetase functions in the citric acid cycle (TCA), coupling the hydrolysis of succinyl-CoA to the synthesis of either ATP or GTP and thus represents the only step of substrate-level phosphorylation in the TCA. The beta subunit provides nucleotide specificity of the enzyme and binds the substrate succinate, while the binding sites for coenzyme A and phosphate are found in the alpha subunit. The sequence is that of Succinate--CoA ligase [ADP-forming] subunit beta from Pelagibacter ubique (strain HTCC1062).